A 226-amino-acid chain; its full sequence is 7-cyano-7-deazaguanine synthase (226 aa).

Position 10-20 (10-20 (FSGGQDSTTLA)) interacts with ATP. Zn(2+) contacts are provided by cysteine 190, cysteine 205, cysteine 208, and cysteine 211.

It belongs to the QueC family. Zn(2+) is required as a cofactor.

The catalysed reaction is 7-carboxy-7-deazaguanine + NH4(+) + ATP = 7-cyano-7-deazaguanine + ADP + phosphate + H2O + H(+). Its pathway is purine metabolism; 7-cyano-7-deazaguanine biosynthesis. Catalyzes the ATP-dependent conversion of 7-carboxy-7-deazaguanine (CDG) to 7-cyano-7-deazaguanine (preQ(0)). The polypeptide is 7-cyano-7-deazaguanine synthase (Helicobacter pylori (strain ATCC 700392 / 26695) (Campylobacter pylori)).